The following is a 322-amino-acid chain: tRNA U34 carboxymethyltransferase (322 aa).

Carboxy-S-adenosyl-L-methionine-binding positions include K91, W105, K110, G129, 179-180 (LE), M195, Y199, and R314.

It belongs to the class I-like SAM-binding methyltransferase superfamily. CmoB family. As to quaternary structure, homotetramer.

The enzyme catalyses carboxy-S-adenosyl-L-methionine + 5-hydroxyuridine(34) in tRNA = 5-carboxymethoxyuridine(34) in tRNA + S-adenosyl-L-homocysteine + H(+). Its function is as follows. Catalyzes carboxymethyl transfer from carboxy-S-adenosyl-L-methionine (Cx-SAM) to 5-hydroxyuridine (ho5U) to form 5-carboxymethoxyuridine (cmo5U) at position 34 in tRNAs. This chain is tRNA U34 carboxymethyltransferase, found in Pseudomonas aeruginosa (strain ATCC 15692 / DSM 22644 / CIP 104116 / JCM 14847 / LMG 12228 / 1C / PRS 101 / PAO1).